Here is a 198-residue protein sequence, read N- to C-terminus: Nucleoside triphosphate pyrophosphatase (198 aa).

Catalysis depends on Asp-72, which acts as the Proton acceptor.

This sequence belongs to the Maf family. Requires a divalent metal cation as cofactor.

It localises to the cytoplasm. It catalyses the reaction a ribonucleoside 5'-triphosphate + H2O = a ribonucleoside 5'-phosphate + diphosphate + H(+). The enzyme catalyses a 2'-deoxyribonucleoside 5'-triphosphate + H2O = a 2'-deoxyribonucleoside 5'-phosphate + diphosphate + H(+). Nucleoside triphosphate pyrophosphatase. May have a dual role in cell division arrest and in preventing the incorporation of modified nucleotides into cellular nucleic acids. The polypeptide is Nucleoside triphosphate pyrophosphatase (Corynebacterium diphtheriae (strain ATCC 700971 / NCTC 13129 / Biotype gravis)).